A 269-amino-acid chain; its full sequence is Probable membrane transporter protein YfcA (269 aa).

Topologically, residues 1-7 are periplasmic; it reads METFNSL. A helical membrane pass occupies residues 8 to 28; that stretch reads FMVSPLLLGVLFFVAMLAGFI. Over 29–30 the chain is Cytoplasmic; it reads DS. The chain crosses the membrane as a helical span at residues 31 to 51; that stretch reads IAGGGGLLTIPALMAAGMSPA. The Periplasmic segment spans residues 52–84; sequence NALATNKLQACGGSISATIYFIRRKVVSLSDQK. A helical membrane pass occupies residues 85–105; the sequence is LNIAMTFVGSMSGALLVQYVQ. The Cytoplasmic segment spans residues 106–111; it reads ADVLRQ. The chain crosses the membrane as a helical span at residues 112–132; it reads ILPILVICIGLYFLLMPKLGE. Residues 133–156 lie on the Periplasmic side of the membrane; it reads EDRQRRMYGLPFALIAGGCVGFYD. The chain crosses the membrane as a helical span at residues 157 to 177; the sequence is GFFGPAAGSFYALAFVTLCGF. Over 178-197 the chain is Cytoplasmic; it reads NLAKATAHAKLLNATSNIGG. Residues 198–218 form a helical membrane-spanning segment; that stretch reads LLLFILGGKVIWATGFVMLVG. The Periplasmic segment spans residues 219-269; sequence QFLGARMGSRLVLSKGQKLIRPMIVIVSAVMSAKLLYDSHGQEILHWLGMN.

Belongs to the 4-toluene sulfonate uptake permease (TSUP) (TC 2.A.102) family.

It is found in the cell inner membrane. The sequence is that of Probable membrane transporter protein YfcA (yfcA) from Escherichia coli O157:H7.